The chain runs to 677 residues: MSKQNKLTKVLDNDLDDIDIEEDDSTNRKFESMSEDEETPGMCCECTDQPAEVVCLQCQDELCTVCSTSLHRRGSRRSHIFKNKHGQELDYDELNKRDRQPPLHGKEDEKVQNNNNNNNNTNNTNNIEMDDNKSINNNNNNINSINSMYRGTSNLLNPLPFHHTNQQRNGGGSNNHQINNHHKDEDEEIDEDEEKFIHKNENFTDFIPRLSKDWFTERSKYIPIRLNIRERNDLRLLEAALHVSEYTDKIDIIHVGGSKSKRINDQLRGMCAILSGLLVASDFKKGQQLVENKDFFENEEFFQNVFEIGRRHKIMNPAKMRTEYGKMIHLLQDAADEDVKKNLSGLNMIKPLKTVFLFLDERNGLKLLEDPLLELATREVLAENKTRPQIQREIREKEHAIKTLSRRYSSSMLKSEEIEVCIYSICDNHTFLRENRDPVKKMKHLLKEYFSPNQSERGFSLALEHGIGGARLSHNHRKQYNYVYQSLSLWQHILHDMFKLWYFAEIDLLCGHRYQLSNTGQGLNRIQQCPNVGKIMHSILRQTQKKVGDDWVGSSVIHLGDHNVPNSLVFIDKYTQISRILSPIVLTIEYIPKITDPNLVAYIKNTFGGPQTLTKIILCDFFKHAFDGSGADNFFDAGSCIDGRLTSAWQWSAQIAKKPYYPIFLLSGFSGFDGSFN.

Residues 38-84 (ETPGMCCECTDQPAEVVCLQCQDELCTVCSTSLHRRGSRRSHIFKNK) form a B box-type; atypical zinc finger. The Zn(2+) site is built by C43, C46, C66, and H71. Basic and acidic residues predominate over residues 91–111 (YDELNKRDRQPPLHGKEDEKV). 2 disordered regions span residues 91–142 (YDEL…NNNI) and 156–192 (LNPL…IDED). Positions 113-126 (NNNNNNNNTNNTNN) are enriched in low complexity. Residues 163–178 (HTNQQRNGGGSNNHQI) are compositionally biased toward polar residues.

Belongs to the UPF0652 family.

This Dictyostelium discoideum (Social amoeba) protein is UPF0652 protein.